Here is a 451-residue protein sequence, read N- to C-terminus: Tapasin-related protein (451 aa).

Residues 1-20 (MGLEPSWYLLLCLAVSGAAG) form the signal peptide. At 21-412 (TDPPTAPTTA…RVLPNPEQRG (392 aa)) the chain is on the lumenal side. An Ig-like V-type domain is found at 196 to 301 (FQVTSETQTL…TSLYQAQQIM (106 aa)). Disulfide bonds link Cys217/Cys288 and Cys326/Cys387. 2 N-linked (GlcNAc...) asparagine glycosylation sites follow: Asn270 and Asn277. The region spanning 302–399 (PLNILAPPKI…AHVSLEEPLT (98 aa)) is the Ig-like C1-type domain. Residues 413–433 (TLGVIFASIIFLSALLLFLGL) traverse the membrane as a helical segment. Residues 434 to 451 (HRQQASSSRSTRPMRHSG) are Cytoplasmic-facing.

As to quaternary structure, interacts with peptide-free HLA-A*02-B2M complexes or those loaded with low affinity peptides, likely facilitating peptide exchange onto higher affinity peptides. Interacts with MR1 in a ligand-independent way; this interaction may stabilize MR1 pool and facilitate ligand loading and dissociation. In terms of tissue distribution, widely expressed.

It is found in the cell membrane. It localises to the endoplasmic reticulum membrane. The protein resides in the microsome membrane. The protein localises to the golgi apparatus membrane. Component of the antigen processing and presentation pathway, which binds to MHC class I coupled with beta2-microglobulin/B2M. Association between TAPBPR and MHC class I occurs in the absence of a functional peptide-loading complex (PLC). Expression seems to slow down and down-regulate MHC class I surface expression. The protein is Tapasin-related protein (Tapbpl) of Mus musculus (Mouse).